The following is a 232-amino-acid chain: tRNA1(Val) (adenine(37)-N6)-methyltransferase (232 aa).

Belongs to the methyltransferase superfamily. tRNA (adenine-N(6)-)-methyltransferase family.

The protein resides in the cytoplasm. It carries out the reaction adenosine(37) in tRNA1(Val) + S-adenosyl-L-methionine = N(6)-methyladenosine(37) in tRNA1(Val) + S-adenosyl-L-homocysteine + H(+). In terms of biological role, specifically methylates the adenine in position 37 of tRNA(1)(Val) (anticodon cmo5UAC). The chain is tRNA1(Val) (adenine(37)-N6)-methyltransferase from Haemophilus influenzae (strain 86-028NP).